The chain runs to 120 residues: Large ribosomal subunit protein eL8 (120 aa).

It belongs to the eukaryotic ribosomal protein eL8 family. Part of the 50S ribosomal subunit. Probably part of the RNase P complex.

The protein resides in the cytoplasm. Multifunctional RNA-binding protein that recognizes the K-turn motif in ribosomal RNA, the RNA component of RNase P, box H/ACA, box C/D and box C'/D' sRNAs. The polypeptide is Large ribosomal subunit protein eL8 (Halorubrum lacusprofundi (strain ATCC 49239 / DSM 5036 / JCM 8891 / ACAM 34)).